The sequence spans 370 residues: MQALNSISSLQTSASLFPVSLNSDVSANTSTSSKELKAVIDQLVQALTQSGQLDETSPLGKMLAKAMAADGKSANSIDDITASLDKLIHEKLGDNFGASAGIGAGGGGGGIGGAGSGSGVGGGLSSDAGAGQSDLMSQVLNGLGKAVLDDLLTPSGEGGTTFSSDDMPTLEKVAQFMDDNKAQFPTRDGGSWMNELKEDNGLDAQETAQFRSALDVIGQQLGQQQGDASGVTSGGGLGSPVSDSSLGNPAIDANTGPAANGNASVDVGQLIGQLIDRGLQSVSSGGGLGTPVDNSTQPTGGTPAANPTGNVSNQDLGQLLSGLLQRGLEATLQDAGNTGADLQSSAAQVAAQLINALLQGTNNQTNQAVA.

Residues 221 to 231 (LGQQQGDASGV) are compositionally biased toward polar residues. 2 disordered regions span residues 221–257 (LGQQ…NTGP) and 282–314 (VSSG…VSNQ). 2 repeat units span residues 235–240 (GGLGSP) and 286–291 (GGLGTP). The interval 235-291 (GGLGSPVSDSSLGNPAIDANTGPAANGNASVDVGQLIGQLIDRGLQSVSSGGGLGTP) is 2 X 7 AA repeats of G-G-G-L-G-[ST]-P. A compositionally biased stretch (polar residues) spans 292 to 313 (VDNSTQPTGGTPAANPTGNVSN).

The protein belongs to the harpin HrpZ family. As to quaternary structure, homomultimeric.

It localises to the secreted. The protein localises to the host cell membrane. Harpins are proteins able to elicit hypersensitive response (HR) in non-host plants and are required for pathogenicity in host plants. HrpZ forms ion-conducting pores permeable for cations. Such pore-forming activity may allow nutrient release and/or delivery of virulence factors during bacterial colonization of host plants. The protein is Harpin HrpZ (hrpZ) of Pseudomonas syringae pv. tomato (strain ATCC BAA-871 / DC3000).